Consider the following 1863-residue polypeptide: Breast cancer type 1 susceptibility protein (1863 aa).

M1 carries the post-translational modification N-acetylmethionine. An RING-type zinc finger spans residues 24-65; that stretch reads CPICLELIKEPVSTKCDHIFCKFCMLKLLNQKKGPSQCPLCK. A Glycyl lysine isopeptide (Lys-Gly) (interchain with G-Cter in SUMO2) cross-link involves residue K109. Position 114 is a phosphoserine (S114). Positions 230-270 are disordered; the sequence is ETDVTNTEHHQPSNNDLNTTEKRAAERHPEKYQGSSVSNLH. Over residues 248 to 260 the composition is skewed to basic and acidic residues; sequence TTEKRAAERHPEK. A Glycyl lysine isopeptide (Lys-Gly) (interchain with G-Cter in SUMO2) cross-link involves residue K301. Residues 306–338 are disordered; that stretch reads NKSKQPGLARSQHNRWAGSKETCNDRRTPSTEK. Residues 327-338 are compositionally biased toward basic and acidic residues; it reads TCNDRRTPSTEK. K339 participates in a covalent cross-link: Glycyl lysine isopeptide (Lys-Gly) (interchain with G-Cter in SUMO2). 4 positions are modified to phosphoserine: S395, S398, S423, and S434. Residues K443, K459, and K519 each participate in a glycyl lysine isopeptide (Lys-Gly) (interchain with G-Cter in SUMO2) cross-link. Residues 534–544 show a composition bias toward low complexity; it reads QGTNQTEQNGQ. The tract at residues 534 to 570 is disordered; that stretch reads QGTNQTEQNGQVMNITNSGHENKTKGDSIQNEKNPNP. Phosphoserine is present on S551. Glycyl lysine isopeptide (Lys-Gly) (interchain with G-Cter in SUMO2) cross-links involve residues K583 and K654. Residues 654 to 709 form a disordered region; it reads KYNQMPVRHSRNLQLMEGKEPATGAKKSNKPNEQTSKRHDSDTFPELKLTNAPGSF. S694, S708, and S725 each carry phosphoserine. Residues K734 and K739 each participate in a glycyl lysine isopeptide (Lys-Gly) (interchain with G-Cter in SUMO2) cross-link. S753 and S840 each carry phosphoserine. Glycyl lysine isopeptide (Lys-Gly) (interchain with G-Cter in SUMO2) cross-links involve residues K918 and K987. Residue S988 is modified to Phosphoserine; by CHEK2. At S1009 the chain carries Phosphoserine. K1079 participates in a covalent cross-link: Glycyl lysine isopeptide (Lys-Gly) (interchain with G-Cter in SUMO2). Phosphoserine; by ATR; in vitro is present on S1143. Residues 1181 to 1216 are disordered; it reads VQKGELSRSPSPFTHTHLAQGYRRGAKKLESSEENL. A phosphoserine mark is found at S1189, S1191, S1211, S1217, and S1218. The residue at position 1280 (S1280) is a Phosphoserine; by ATR; in vitro. The tract at residues 1322–1387 is disordered; it reads KQMRHQSESQ…VSEDCSGLSS (66 aa). A phosphoserine mark is found at S1328, S1336, and S1342. Positions 1373 to 1387 are enriched in polar residues; it reads ESETSVSEDCSGLSS. Phosphoserine; by ATM and ATR is present on S1387. Residue T1394 is modified to Phosphothreonine; by ATR; in vitro. The interval 1397–1424 is interaction with PALB2; that stretch reads RDTMQHNLIKLQQEMAELEAVLEQHGSQ. S1423 bears the Phosphoserine; by ATM and ATR mark. Positions 1440-1505 are disordered; the sequence is EDLRNPEQST…SSPSKCPSLD (66 aa). Over residues 1445 to 1470 the composition is skewed to polar residues; that stretch reads PEQSTSEKAVLTSQKSSEYPISQNPE. Residue S1457 is modified to Phosphoserine; by ATR; in vitro. Position 1524 is a phosphoserine; by ATM (S1524). S1542 is modified (phosphoserine). Residues 1565–1596 form a disordered region; the sequence is ESGISLFSDDPESDPSEDRAPESARVGNIPSS. BRCT domains are found at residues 1642 to 1736 and 1756 to 1855; these read STER…DFEV and QDRK…TYLI.

As to quaternary structure, heterodimer with BARD1. Part of the BRCA1-associated genome surveillance complex (BASC), which contains BRCA1, MSH2, MSH6, MLH1, ATM, BLM, PMS2 and the MRE11-RAD50-NBN protein (MRN) complex. This association could be a dynamic process changing throughout the cell cycle and within subnuclear domains. Component of the BRCA1-A complex, at least composed of BRCA1, BARD1, UIMC1/RAP80, ABRAXAS1, BRCC3/BRCC36, BABAM2 and BABAM1/NBA1. Interacts (via the BRCT domains) with ABRAXAS1 (phosphorylated form); this is important for recruitment to sites of DNA damage. Can form a heterotetramer with two molecules of ABRAXAS1 (phosphorylated form). Component of the BRCA1-RBBP8 complex. Interacts (via the BRCT domains) with RBBP8 ('Ser-327' phosphorylated form); the interaction ubiquitinates RBBP8, regulates CHEK1 activation, and involves RBBP8 in BRCA1-dependent G2/M checkpoint control on DNA damage. Associates with RNA polymerase II holoenzyme. Interacts with SMC1A, NELFB, DCLRE1C, CLSPN. Interacts with CHEK1, CHEK2, BAP1, BRCC3, UBXN1 and PCLAF. Interacts (via BRCT domains) with BRIP1 (phosphorylated form). Interacts with FANCD2 (ubiquitinated form). Interacts with H2AX (phosphorylated on 'Ser-140'). Interacts (via the BRCT domains) with ACACA (phosphorylated form); the interaction prevents dephosphorylation of ACACA. Part of a BRCA complex containing BRCA1, BRCA2 and PALB2. Interacts directly with PALB2; the interaction is essential for its function in HRR. Interacts directly with BRCA2; the interaction occurs only in the presence of PALB2 which serves as the bridging protein. Interacts (via the BRCT domains) with LMO4; the interaction represses the transcriptional activity of BRCA1. Interacts (via the BRCT domains) with CCAR2 (via N-terminus); the interaction represses the transcriptional activator activity of BRCA1. Interacts with EXD2. Interacts (via C-terminus) with DHX9; this interaction is direct and links BRCA1 to the RNA polymerase II holoenzyme. Interacts with DNA helicase ZGRF1; the interaction is increased following DNA damage induction. Phosphorylated in response to IR, UV, and various stimuli that cause checkpoint activation, probably by ATM or ATR. Phosphorylation at Ser-988 by CHEK2 regulates mitotic spindle assembly. Phosphorylation by AURKA regulates centrosomal microtubule nucleation. Post-translationally, autoubiquitinated, undergoes 'Lys-6'-linked polyubiquitination. 'Lys-6'-linked polyubiquitination does not promote degradation. Isoform 1 and isoform 3 are widely expressed. Isoform 3 is reduced or absent in several breast and ovarian cancer cell lines.

Its subcellular location is the nucleus. The protein resides in the chromosome. The protein localises to the cytoplasm. It carries out the reaction S-ubiquitinyl-[E2 ubiquitin-conjugating enzyme]-L-cysteine + [acceptor protein]-L-lysine = [E2 ubiquitin-conjugating enzyme]-L-cysteine + N(6)-ubiquitinyl-[acceptor protein]-L-lysine.. Its pathway is protein modification; protein ubiquitination. The E3 ubiquitin-protein ligase activity is inhibited by phosphorylation by AURKA. Activity is increased by phosphatase treatment. Functionally, E3 ubiquitin-protein ligase that specifically mediates the formation of 'Lys-6'-linked polyubiquitin chains and plays a central role in DNA repair by facilitating cellular responses to DNA damage. It is unclear whether it also mediates the formation of other types of polyubiquitin chains. The BRCA1-BARD1 heterodimer coordinates a diverse range of cellular pathways such as DNA damage repair, ubiquitination and transcriptional regulation to maintain genomic stability. Regulates centrosomal microtubule nucleation. Required for appropriate cell cycle arrests after ionizing irradiation in both the S-phase and the G2 phase of the cell cycle. Required for FANCD2 targeting to sites of DNA damage. Inhibits lipid synthesis by binding to inactive phosphorylated ACACA and preventing its dephosphorylation. Contributes to homologous recombination repair (HRR) via its direct interaction with PALB2, fine-tunes recombinational repair partly through its modulatory role in the PALB2-dependent loading of BRCA2-RAD51 repair machinery at DNA breaks. Component of the BRCA1-RBBP8 complex which regulates CHEK1 activation and controls cell cycle G2/M checkpoints on DNA damage via BRCA1-mediated ubiquitination of RBBP8. Acts as a transcriptional activator. This chain is Breast cancer type 1 susceptibility protein (BRCA1), found in Homo sapiens (Human).